Reading from the N-terminus, the 387-residue chain is Patatin group A-2 (387 aa).

A signal peptide spans 1–23 (MATTKSFLILIVMILATTSSTFA). Residues 32–230 (LSIDGGGIKG…TVADPALLSV (199 aa)) enclose the PNPLA domain. The short motif at 36-41 (GGGIKG) is the GXGXXG element. The GXSXG signature appears at 75-79 (GTSTG). Serine 77 (nucleophile) is an active-site residue. Asparagine 115 carries N-linked (GlcNAc...) asparagine glycosylation. The Proton acceptor role is filled by aspartate 216. The short motif at 216–218 (DGA) is the DGA/G element. A coiled-coil region spans residues 361–385 (ETYEEALKRFAKLLSDRKKLRANKA).

It belongs to the patatin family. In terms of tissue distribution, tuber and stolon.

It is found in the vacuole. Functionally, probable lipolytic acyl hydrolase (LAH), an activity which is thought to be involved in the response of tubers to pathogens. This is Patatin group A-2 from Solanum tuberosum (Potato).